A 458-amino-acid chain; its full sequence is Exodeoxyribonuclease 7 large subunit (458 aa).

Belongs to the XseA family. As to quaternary structure, heterooligomer composed of large and small subunits.

The protein resides in the cytoplasm. It carries out the reaction Exonucleolytic cleavage in either 5'- to 3'- or 3'- to 5'-direction to yield nucleoside 5'-phosphates.. Its function is as follows. Bidirectionally degrades single-stranded DNA into large acid-insoluble oligonucleotides, which are then degraded further into small acid-soluble oligonucleotides. In Serratia proteamaculans (strain 568), this protein is Exodeoxyribonuclease 7 large subunit.